The primary structure comprises 368 residues: V-type proton ATPase subunit C (368 aa).

It belongs to the V-ATPase C subunit family. As to quaternary structure, V-ATPase is a heteromultimeric enzyme composed of a peripheral catalytic V1 complex (components A to H) attached to an integral membrane V0 proton pore complex (components: a, c, c', c'' and d).

Its function is as follows. Subunit of the peripheral V1 complex of vacuolar ATPase. Subunit C is necessary for the assembly of the catalytic sector of the enzyme and is likely to have a specific function in its catalytic activity. V-ATPase is responsible for acidifying a variety of intracellular compartments in eukaryotic cells. This is V-type proton ATPase subunit C (vatC) from Dictyostelium discoideum (Social amoeba).